The following is an 857-amino-acid chain: Leucine--tRNA ligase (857 aa).

The 'HIGH' region motif lies at 42 to 52 (PYPSGRLHMGH). Residues 617-621 (KMSKS) carry the 'KMSKS' region motif. Lysine 620 is an ATP binding site.

This sequence belongs to the class-I aminoacyl-tRNA synthetase family.

Its subcellular location is the cytoplasm. It carries out the reaction tRNA(Leu) + L-leucine + ATP = L-leucyl-tRNA(Leu) + AMP + diphosphate. This is Leucine--tRNA ligase from Vibrio vulnificus (strain CMCP6).